The chain runs to 174 residues: Serine protease 2 (174 aa).

Cysteine 15 and cysteine 36 are oxidised to a cystine. Catalysis depends on charge relay system residues histidine 35, aspartate 65, and serine 147. Cysteine 141 and cysteine 168 are oxidised to a cystine.

Belongs to the peptidase S1 family.

It localises to the secreted. Functionally, broad substrate specificity. In Streptomyces fradiae (Streptomyces roseoflavus), this protein is Serine protease 2.